The sequence spans 748 residues: Rho GTPase-activating protein 24 (748 aa).

Positions 1–20 (MEENNDSTENPQQGQGRQNA) are disordered. A compositionally biased stretch (polar residues) spans 7-18 (STENPQQGQGRQ). In terms of domain architecture, PH spans 19-125 (NAIKCGWLRK…WVKSIRRVIW (107 aa)). One can recognise a Rho-GAP domain in the interval 135-329 (QKLEDTVRYE…VMISKHDCLF (195 aa)). 2 disordered regions span residues 354–476 (TMGQ…GTHS) and 582–641 (DFFG…SSNH). 2 stretches are compositionally biased toward polar residues: residues 356-374 (GQLQ…SRQC) and 382-405 (PQRS…SPKN). A phosphoserine mark is found at Ser369, Ser391, Ser396, Ser398, Ser402, Ser413, Ser415, and Ser437. Over residues 432 to 476 (IVTNGSFSSSNAEGLEKTQTTPNGSLQARRSSSLKVSGTKMGTHS) the composition is skewed to polar residues. The residue at position 452 (Thr452) is a Phosphothreonine. Residues 600–615 (DLSHPRDYESKSDHRS) show a composition bias toward basic and acidic residues. A compositionally biased stretch (low complexity) spans 617-641 (GGRSSRATSSSDNSETFVGNSSSNH). Positions 649 to 729 (SSLKQEMTKQ…KEMEQFFSTF (81 aa)) form a coiled coil.

As to quaternary structure, interacts with FLNA. In terms of processing, phosphorylated by ROCK, leading to activate the RacGAP activity. In terms of tissue distribution, isoform 1 is widely expressed with a higher level in kidney. Isoform 2 is mainly expressed in endothelial cells.

It localises to the cytoplasm. The protein localises to the cytoskeleton. Its subcellular location is the cell junction. The protein resides in the adherens junction. It is found in the focal adhesion. It localises to the cell projection. Rho GTPase-activating protein involved in cell polarity, cell morphology and cytoskeletal organization. Acts as a GTPase activator for the Rac-type GTPase by converting it to an inactive GDP-bound state. Controls actin remodeling by inactivating Rac downstream of Rho leading to suppress leading edge protrusion and promotes cell retraction to achieve cellular polarity. Able to suppress RAC1 and CDC42 activity in vitro. Overexpression induces cell rounding with partial or complete disruption of actin stress fibers and formation of membrane ruffles, lamellipodia, and filopodia. Isoform 2 is a vascular cell-specific GAP involved in modulation of angiogenesis. In Homo sapiens (Human), this protein is Rho GTPase-activating protein 24 (ARHGAP24).